A 521-amino-acid chain; its full sequence is RING-type E3 ubiquitin-protein ligase PPIL2 (521 aa).

One can recognise a U-box domain in the interval 35-108 (RRLPFDHCSL…GQYHCPVLYS (74 aa)). Positions 197–217 (LKNTNSETRETLQELYKEFKG) form a coiled coil. K216 is covalently cross-linked (Glycyl lysine isopeptide (Lys-Gly) (interchain with G-Cter in SUMO2)). Positions 278 to 433 (KKGYVRLHTN…EEVLICTTTV (156 aa)) constitute a PPIase cyclophilin-type domain. Basic and acidic residues predominate over residues 447–462 (QERKKTQHQVDPEAKV). A disordered region spans residues 447–521 (QERKKTQHQV…SRGFGDFSSW (75 aa)). Residues 465–478 (SQPQPGNQGPQTYR) show a composition bias toward polar residues. K483 bears the N6-acetyllysine mark.

Belongs to the cyclophilin-type PPIase family. PPIL2 subfamily. Component of the minor spliceosome, which splices U12-type introns. Within this complex, interacts with PRPF8/PRP8, EFTUD2/SNU114 and PLRG1. Interacts with isoform 2 of BSG. Interacts (via the PPIase cyclophilin-type domain) with CRNKL1; they may form a trimeric complex with HSP90.

It is found in the nucleus. The enzyme catalyses S-ubiquitinyl-[E2 ubiquitin-conjugating enzyme]-L-cysteine + [acceptor protein]-L-lysine = [E2 ubiquitin-conjugating enzyme]-L-cysteine + N(6)-ubiquitinyl-[acceptor protein]-L-lysine.. Its pathway is protein modification; protein ubiquitination. Functionally, has a ubiquitin-protein ligase activity acting as an E3 ubiquitin protein ligase or as an ubiquitin-ubiquitin ligase promoting elongation of ubiquitin chains on substrates. By mediating 'Lys-48'-linked polyubiquitination of proteins could target them for proteasomal degradation. May also function as a chaperone, playing a role in transport to the cell membrane of BSG/Basigin for instance. Probable inactive PPIase with no peptidyl-prolyl cis-trans isomerase activity. As a component of the minor spliceosome, involved in the splicing of U12-type introns in pre-mRNAs. This is RING-type E3 ubiquitin-protein ligase PPIL2 from Mus musculus (Mouse).